The following is a 347-amino-acid chain: Isopentenyl-diphosphate delta-isomerase (347 aa).

Substrate is bound at residue 5–6; that stretch reads RK. FMN-binding positions include serine 61, 62-64, serine 92, and asparagine 120; that span reads SMT. Residue 92–94 participates in substrate binding; the sequence is SMR. Glutamine 159 contributes to the substrate binding site. Glutamate 160 serves as a coordination point for Mg(2+). Residues lysine 189, serine 214, threonine 219, 269 to 271, and 290 to 291 each bind FMN; these read GLR and AR.

Belongs to the IPP isomerase type 2 family. In terms of assembly, homooctamer. Dimer of tetramers. FMN is required as a cofactor. Requires NADPH as cofactor. It depends on Mg(2+) as a cofactor.

The protein resides in the cytoplasm. The catalysed reaction is isopentenyl diphosphate = dimethylallyl diphosphate. Functionally, involved in the biosynthesis of isoprenoids. Catalyzes the 1,3-allylic rearrangement of the homoallylic substrate isopentenyl (IPP) to its allylic isomer, dimethylallyl diphosphate (DMAPP). This Thermoplasma volcanium (strain ATCC 51530 / DSM 4299 / JCM 9571 / NBRC 15438 / GSS1) protein is Isopentenyl-diphosphate delta-isomerase.